We begin with the raw amino-acid sequence, 515 residues long: Cytoplasmic dynein 1 light intermediate chain 1 (515 aa).

Residues 1 to 24 show a composition bias toward low complexity; it reads MAAVGRAGSFGSSSASGAANNASA. The disordered stretch occupies residues 1–34; sequence MAAVGRAGSFGSSSASGAANNASAELRAGGEEDD. Residue 64-71 coordinates ATP; that stretch reads GEDGAGKT. Disordered stretches follow at residues 370-424 and 445-515; these read QSQL…DPNM and KTGS…GEAS. Polar residues predominate over residues 397 to 409; the sequence is RTPNRSVTSNVAS. Gly residues predominate over residues 448-468; the sequence is SPGGPGGVGGSPGGGSAGGTG. The segment covering 490–499 has biased composition (basic and acidic residues); it reads ELDRISRKPE. Over residues 502–515 the composition is skewed to polar residues; sequence SPTSPTSPTEGEAS.

Belongs to the dynein light intermediate chain family. Homodimer. The cytoplasmic dynein 1 complex consists of two catalytic heavy chains (HCs) and a number of non-catalytic subunits presented by intermediate chains (ICs). Phosphorylated.

It localises to the cytoplasm. The protein localises to the cytoskeleton. The protein resides in the chromosome. Its subcellular location is the centromere. It is found in the kinetochore. It localises to the spindle pole. The protein localises to the recycling endosome membrane. Its function is as follows. Acts as one of several non-catalytic accessory components of the cytoplasmic dynein 1 complex that are thought to be involved in linking dynein to cargos and to adapter proteins that regulate dynein function. Cytoplasmic dynein 1 acts as a motor for the intracellular retrograde motility of vesicles and organelles along microtubules. May play a role in binding dynein to membranous organelles or chromosomes. May regulate the movement of peripheral sorting endosomes along microtubule tracks toward the microtubule organizing center/centrosome, generating the endosomal recycling compartment. The chain is Cytoplasmic dynein 1 light intermediate chain 1 (DYNC1LI1) from Gallus gallus (Chicken).